A 97-amino-acid chain; its full sequence is Citrate lyase acyl carrier protein (97 aa).

Ser-14 bears the O-(phosphoribosyl dephospho-coenzyme A)serine mark.

This sequence belongs to the CitD family. As to quaternary structure, oligomer with a subunit composition of (alpha,beta,gamma)6.

The protein resides in the cytoplasm. Functionally, covalent carrier of the coenzyme of citrate lyase. The polypeptide is Citrate lyase acyl carrier protein (Cronobacter sakazakii (strain ATCC BAA-894) (Enterobacter sakazakii)).